Reading from the N-terminus, the 505-residue chain is 2,3-bisphosphoglycerate-independent phosphoglycerate mutase (505 aa).

The Mn(2+) site is built by aspartate 11 and serine 61. The active-site Phosphoserine intermediate is the serine 61. Residues histidine 122, 152–153, arginine 183, arginine 189, 259–262, and lysine 332 contribute to the substrate site; these read RD and RTDR. Mn(2+) is bound by residues aspartate 399, histidine 403, aspartate 440, histidine 441, and histidine 458.

Belongs to the BPG-independent phosphoglycerate mutase family. In terms of assembly, monomer. Mn(2+) is required as a cofactor.

It catalyses the reaction (2R)-2-phosphoglycerate = (2R)-3-phosphoglycerate. It participates in carbohydrate degradation; glycolysis; pyruvate from D-glyceraldehyde 3-phosphate: step 3/5. Functionally, catalyzes the interconversion of 2-phosphoglycerate and 3-phosphoglycerate. The sequence is that of 2,3-bisphosphoglycerate-independent phosphoglycerate mutase from Flavobacterium johnsoniae (strain ATCC 17061 / DSM 2064 / JCM 8514 / BCRC 14874 / CCUG 350202 / NBRC 14942 / NCIMB 11054 / UW101) (Cytophaga johnsonae).